Here is a 177-residue protein sequence, read N- to C-terminus: UPF0178 protein TP_0845 (177 aa).

Positions 155-177 are disordered; it reads EAKTGEEQCDWPSAQGKSQTGRR.

The protein belongs to the UPF0178 family.

This is UPF0178 protein TP_0845 from Treponema pallidum (strain Nichols).